Here is a 642-residue protein sequence, read N- to C-terminus: Threonine--tRNA ligase (642 aa).

Residues 1–61 (MPVITLPDGS…ENDATLSIIT (61 aa)) form the TGS domain. The catalytic stretch occupies residues 243-534 (DHRKIGKQLD…LTEEFAGFFP (292 aa)). 3 residues coordinate Zn(2+): Cys-334, His-385, and His-511.

This sequence belongs to the class-II aminoacyl-tRNA synthetase family. As to quaternary structure, homodimer. It depends on Zn(2+) as a cofactor.

The protein resides in the cytoplasm. It catalyses the reaction tRNA(Thr) + L-threonine + ATP = L-threonyl-tRNA(Thr) + AMP + diphosphate + H(+). Catalyzes the attachment of threonine to tRNA(Thr) in a two-step reaction: L-threonine is first activated by ATP to form Thr-AMP and then transferred to the acceptor end of tRNA(Thr). Also edits incorrectly charged L-seryl-tRNA(Thr). The polypeptide is Threonine--tRNA ligase (Salmonella agona (strain SL483)).